The following is a 63-amino-acid chain: Cytochrome c oxidase subunit 7C, mitochondrial (63 aa).

The N-terminal 16 residues, 1–16 (MLGQSIRRFTTSVVRR), are a transit peptide targeting the mitochondrion. Residues 17–33 (SHYEEGPGKNIPFSVEN) lie on the Mitochondrial matrix side of the membrane. The residue at position 25 (Lys25) is an N6-acetyllysine; alternate. Lys25 carries the post-translational modification N6-succinyllysine; alternate. A helical membrane pass occupies residues 34 to 60 (KWRLLAMMTLFFGSGFAAPFFIVRHQL). Over 61 to 63 (LKK) the chain is Mitochondrial intermembrane.

The protein belongs to the cytochrome c oxidase VIIc family. In terms of assembly, component of the cytochrome c oxidase (complex IV, CIV), a multisubunit enzyme composed of 14 subunits. The complex is composed of a catalytic core of 3 subunits MT-CO1, MT-CO2 and MT-CO3, encoded in the mitochondrial DNA, and 11 supernumerary subunits COX4I1 (or COX4I2), COX5A, COX5B, COX6A2 (or COX6A1), COX6B1 (or COX6B2), COX6C, COX7A1 (or COX7A2), COX7B, COX7C, COX8B and NDUFA4, which are encoded in the nuclear genome. The complex exists as a monomer or a dimer and forms supercomplexes (SCs) in the inner mitochondrial membrane with NADH-ubiquinone oxidoreductase (complex I, CI) and ubiquinol-cytochrome c oxidoreductase (cytochrome b-c1 complex, complex III, CIII), resulting in different assemblies (supercomplex SCI(1)III(2)IV(1) and megacomplex MCI(2)III(2)IV(2)). Interacts with RAB5IF. Liver, heart, muscle and brain, contain the same isoform of COX VIIc, but at different concentrations.

It localises to the mitochondrion inner membrane. The protein operates within energy metabolism; oxidative phosphorylation. In terms of biological role, component of the cytochrome c oxidase, the last enzyme in the mitochondrial electron transport chain which drives oxidative phosphorylation. The respiratory chain contains 3 multisubunit complexes succinate dehydrogenase (complex II, CII), ubiquinol-cytochrome c oxidoreductase (cytochrome b-c1 complex, complex III, CIII) and cytochrome c oxidase (complex IV, CIV), that cooperate to transfer electrons derived from NADH and succinate to molecular oxygen, creating an electrochemical gradient over the inner membrane that drives transmembrane transport and the ATP synthase. Cytochrome c oxidase is the component of the respiratory chain that catalyzes the reduction of oxygen to water. Electrons originating from reduced cytochrome c in the intermembrane space (IMS) are transferred via the dinuclear copper A center (CU(A)) of subunit 2 and heme A of subunit 1 to the active site in subunit 1, a binuclear center (BNC) formed by heme A3 and copper B (CU(B)). The BNC reduces molecular oxygen to 2 water molecules using 4 electrons from cytochrome c in the IMS and 4 protons from the mitochondrial matrix. In Bos taurus (Bovine), this protein is Cytochrome c oxidase subunit 7C, mitochondrial (COX7C).